Reading from the N-terminus, the 408-residue chain is Putative gustatory receptor 58b (408 aa).

Residues 1–44 (MLHPKLGRVMNVVYYHSVVFALMSTTLRIRSCRKCLRLEKVSRT) lie on the Cytoplasmic side of the membrane. A helical transmembrane segment spans residues 45–65 (YTIYSFFVGIFLFLNLYFMVP). Over 66–82 (RIMEDGYMKYNIVLQWN) the chain is Extracellular. The chain crosses the membrane as a helical span at residues 83-103 (FFVMLFLRAIAVVSCYGTLWL). Topologically, residues 104–150 (KRHKIIQLYKYSLIYWKRFGHITRAIVDKKELLDLQESLARIMIRKI) are cytoplasmic. The helical transmembrane segment at 151–171 (ILLYSAFLCSTVLQYQLLSVI) threads the bilayer. The Extracellular segment spans residues 172–193 (NPQIFLAFCARLTHFLHFLCVK). Residues 194–214 (MGFFGVLVLLNHQFLVIHLAI) form a helical membrane-spanning segment. Topologically, residues 215–245 (NALHGRKARKKWKALRSVAAMHLKTLRLARR) are cytoplasmic. The helical transmembrane segment at 246-266 (IFDMFDIANATVFINMFMTAI) threads the bilayer. Over 267–284 (NILYHAVQYSNSSIKSNG) the chain is Extracellular. Asparagine 277 is a glycosylation site (N-linked (GlcNAc...) asparagine). Residues 285–305 (WGILFGNGLIVFNFWGTMALM) traverse the membrane as a helical segment. Topologically, residues 306 to 364 (EMLDSVVTSCNNTGQQLRQLSDLPKVGPKMQRELDVFTMQLRQNRLVYKICGIVELDKP) are cytoplasmic. The chain crosses the membrane as a helical span at residues 365 to 385 (ACLSYIGSILSNVIILMQFDL). At 386-408 (RRQRQPINDRQYLIHLMKNKTKV) the chain is on the extracellular side. N-linked (GlcNAc...) asparagine glycosylation is present at asparagine 404.

The protein belongs to the insect chemoreceptor superfamily. Gustatory receptor (GR) family. Gr22e subfamily. In terms of tissue distribution, expressed in the adult labellar chemosensory neurons, labral sense organ and thorax. In larvae, is in neurons of the terminal external chemosensory organ as well as in the dorsal pharyngeal sense organ.

The protein localises to the cell membrane. Functionally, probable gustatory receptor which mediates acceptance or avoidance behavior, depending on its substrates. This Drosophila melanogaster (Fruit fly) protein is Putative gustatory receptor 58b (Gr58b).